We begin with the raw amino-acid sequence, 696 residues long: MTHTISGQYGRDTIVLETGNWAKQAHGAVVYKSGNLVLLATVCAADDAKEGQDFFPLTCEYTEKLYSVGRFPGGYFKREAKPPEHEILISRIIDRPIRPLFPEGYFCEVQLQVQVLSADGDVSVAGHALNAASVALTISDIPFNGPIAGARIGRINGELILNPTTKEIVNSDLDLVVAGTKTHIVMIEGEAKELSNEEMLSALRFAQKHIAEFVTLQEEYAKQIGVVKREVKLKARDVELLAKVKEYAFAKLTAANQTPDKTVRNKEISNVNKDVVEFFKQTVEDADKIKDIKTYLHELEYEIVREQVLNQGVRFDGRRLDEIRPISVEINPLPGPHGSSVFTRGQTQSLGVVTLGTGSDNQRYETLEGQKEKSFMLHYNFPAFSVGEVRRSSGPGRREIGHGNLAERALKLVLPKSEEFPYVIRVVSEILESNGSSSMASVCSGSLALMAAGVPIKGSVSGIAMGLFSDSSGKYAVLSDIAGLEDHFGDMDCKIAGTRKGITAFQMDLKVTGVSFDVLESVFEQAQRGRFHILDIMEKHISKASDSLAGTAPRIIVRNIPKDRIGELIGPGGKNVRGISELTGAELYIEDDGRVTISGSNQESAEKAAKMVDGFFAEVEVGKIYEGKVKRIADFGAFVEILPGKEGLCHISKIDFKRVNSVKDIVKEGDIIRVKVLNVDKTGKIDLSRKDALEEI.

Mg(2+) is bound by residues Asp486 and Asp492. The KH domain maps to 553 to 612 (PRIIVRNIPKDRIGELIGPGGKNVRGISELTGAELYIEDDGRVTISGSNQESAEKAAKMV). The 69-residue stretch at 622–690 (GKIYEGKVKR…KTGKIDLSRK (69 aa)) folds into the S1 motif domain.

Belongs to the polyribonucleotide nucleotidyltransferase family. Requires Mg(2+) as cofactor.

Its subcellular location is the cytoplasm. It catalyses the reaction RNA(n+1) + phosphate = RNA(n) + a ribonucleoside 5'-diphosphate. In terms of biological role, involved in mRNA degradation. Catalyzes the phosphorolysis of single-stranded polyribonucleotides processively in the 3'- to 5'-direction. This Leptospira borgpetersenii serovar Hardjo-bovis (strain JB197) protein is Polyribonucleotide nucleotidyltransferase.